Consider the following 196-residue polypeptide: MKKMMILSALALFSSSLFAANLTLQKEITPQIVNGEGVTLQEVHNGNRIELKPGHNQIAVTIGQIVFEDGKRRKFDSQPLLLEFVAKPEQALTLEYGKFRTIDDAKKFENNPTVHLTDAQGNPVAFTMVQLYKGGLQGFRDYEREVADYNAQKAQKADSAPLVNHDPKAMDLKTAFKEMTRQEQQAFMQWAMQNLK.

A signal peptide spans 1-19 (MKKMMILSALALFSSSLFA).

This sequence belongs to the UPF0319 family.

This is UPF0319 protein VV0948 from Vibrio vulnificus (strain YJ016).